The sequence spans 229 residues: Peptidase E (229 aa).

Active-site charge relay system residues include Ser120, Asp135, and His157.

The protein belongs to the peptidase S51 family.

The protein localises to the cytoplasm. It carries out the reaction Dipeptidase E catalyzes the hydrolysis of dipeptides Asp-|-Xaa. It does not act on peptides with N-terminal Glu, Asn or Gln, nor does it cleave isoaspartyl peptides.. In terms of biological role, hydrolyzes dipeptides containing N-terminal aspartate residues. May play a role in allowing the cell to use peptide aspartate to spare carbon otherwise required for the synthesis of the aspartate family of amino acids. The sequence is that of Peptidase E (pepE) from Salmonella typhimurium (strain LT2 / SGSC1412 / ATCC 700720).